The sequence spans 778 residues: Preaspterpenacid I synthase sttA (778 aa).

Positions 4–359 are sesterterpenoid synthase; the sequence is ISDVMKHCVP…RYHRTDLATT (356 aa). Aspartate 105 provides a ligand contact to Mg(2+). Position 105 (aspartate 105) interacts with substrate. Positions 211–214 are substrate; that stretch reads RVNE. Asparagine 255 is a binding site for substrate. Substrate regions lie at residues 259-263 and 350-351; these read SFPKE and RY. A geranylfarneyl diphosphate synthase region spans residues 360 to 774; the sequence is AEDRATLIGK…RMMLLGMGPK (415 aa). Positions 423 to 445 are disordered; the sequence is AFKKSNPRNGKQNGTEGSKGTFT. The segment covering 429–445 has biased composition (polar residues); the sequence is PRNGKQNGTEGSKGTFT. Isopentenyl diphosphate-binding residues include lysine 493, arginine 496, and histidine 525. Mg(2+)-binding residues include aspartate 532 and aspartate 536. Arginine 541 is a binding site for dimethylallyl diphosphate. Isopentenyl diphosphate is bound at residue arginine 542. Dimethylallyl diphosphate is bound by residues lysine 619, threonine 620, glutamine 657, asparagine 664, and lysine 674.

This sequence in the N-terminal section; belongs to the terpene synthase family. In the C-terminal section; belongs to the FPP/GGPP synthase family.

It catalyses the reaction 4 isopentenyl diphosphate + dimethylallyl diphosphate = (2E,6E,10E,14E)-geranylfarnesyl diphosphate + 4 diphosphate. The enzyme catalyses (2E,6E,10E,14E)-geranylfarnesyl diphosphate + H2O = preaspterpenacid acid I + diphosphate. It functions in the pathway secondary metabolite biosynthesis; terpenoid biosynthesis. Sesterterpenoid synthase; part of the gene cluster that mediates the biosynthesis of aspterpenacids. Performs both prenyl transferase and terpene cyclase activity, converting isopentenyl diphosphate and dimethylallyl diphosphate into geranylfarnesyl diphosphate (GFPP) and then converting GFPP into preaspterpenacid I. C22-oxidative modification of preaspterpenacid I by the cytochrome P450 monooxygenase sttB then leads to preaspterpenacid II. It has still to be determined how preaspterpenacid II is further modified to produce aspterpenacids. This chain is Preaspterpenacid I synthase sttA, found in Aspergillus terreus.